The chain runs to 433 residues: UPF0597 protein DNO_0106 (433 aa).

This sequence belongs to the UPF0597 family.

The protein is UPF0597 protein DNO_0106 of Dichelobacter nodosus (strain VCS1703A).